Consider the following 357-residue polypeptide: Elongation factor Ts (357 aa).

Residues 82–85 (TDFV) are involved in Mg(2+) ion dislocation from EF-Tu.

This sequence belongs to the EF-Ts family.

It is found in the cytoplasm. Functionally, associates with the EF-Tu.GDP complex and induces the exchange of GDP to GTP. It remains bound to the aminoacyl-tRNA.EF-Tu.GTP complex up to the GTP hydrolysis stage on the ribosome. The polypeptide is Elongation factor Ts (Campylobacter jejuni subsp. jejuni serotype O:23/36 (strain 81-176)).